The following is a 356-amino-acid chain: GTPase Obg (356 aa).

Residues 1-159 (MKFLDEAKVY…RWIWLRMKLI (159 aa)) enclose the Obg domain. The region spanning 160–327 (ADAGLVGLPN…ALRKLADVIS (168 aa)) is the OBG-type G domain. GTP is bound by residues 166 to 173 (GLPNAGKS), 191 to 195 (FTTLH), 212 to 215 (DIPG), 279 to 282 (NKID), and 308 to 310 (SGA). Mg(2+) is bound by residues Ser-173 and Thr-193. Residues 332–356 (SIKAKSTSDSAATEEPWAAPLPPQG) are disordered.

This sequence belongs to the TRAFAC class OBG-HflX-like GTPase superfamily. OBG GTPase family. Monomer. It depends on Mg(2+) as a cofactor.

The protein localises to the cytoplasm. In terms of biological role, an essential GTPase which binds GTP, GDP and possibly (p)ppGpp with moderate affinity, with high nucleotide exchange rates and a fairly low GTP hydrolysis rate. Plays a role in control of the cell cycle, stress response, ribosome biogenesis and in those bacteria that undergo differentiation, in morphogenesis control. This chain is GTPase Obg, found in Bradyrhizobium sp. (strain BTAi1 / ATCC BAA-1182).